We begin with the raw amino-acid sequence, 152 residues long: Transcriptional regulator MraZ (152 aa).

SpoVT-AbrB domains are found at residues Ala-5 to Glu-52 and Ala-81 to Ser-124.

This sequence belongs to the MraZ family. As to quaternary structure, forms oligomers.

The protein resides in the cytoplasm. It is found in the nucleoid. The protein is Transcriptional regulator MraZ of Shewanella baltica (strain OS155 / ATCC BAA-1091).